Reading from the N-terminus, the 210-residue chain is Selenoprotein T2 (210 aa).

A signal peptide spans 1–21 (MAEYSQTGILTALLLFTVVTV). The cysteinyl-selenocysteine (Cys-Sec) cross-link spans 62 to 65 (CISU). A non-standard amino acid (selenocysteine) is located at residue U65.

This sequence belongs to the SelWTH family. Selenoprotein T subfamily. In terms of processing, may contain a selenide-sulfide bond between Cys-62 and Sec-65. This bond is speculated to serve as redox-active pair. Widely expressed in the embryo.

The polypeptide is Selenoprotein T2 (Danio rerio (Zebrafish)).